Reading from the N-terminus, the 41-residue chain is Photosystem II reaction center protein L (41 aa).

A helical membrane pass occupies residues 20 to 40 (SLYLGLLLVFVVGLLFSSYFL).

This sequence belongs to the PsbL family. As to quaternary structure, PSII is composed of 1 copy each of membrane proteins PsbA, PsbB, PsbC, PsbD, PsbE, PsbF, PsbH, PsbI, PsbJ, PsbK, PsbL, PsbM, PsbT, PsbX, PsbY, PsbZ, Psb30/Ycf12, peripheral proteins PsbO, CyanoQ (PsbQ), PsbU, PsbV and a large number of cofactors. It forms dimeric complexes.

It localises to the cellular thylakoid membrane. In terms of biological role, one of the components of the core complex of photosystem II (PSII). PSII is a light-driven water:plastoquinone oxidoreductase that uses light energy to abstract electrons from H(2)O, generating O(2) and a proton gradient subsequently used for ATP formation. It consists of a core antenna complex that captures photons, and an electron transfer chain that converts photonic excitation into a charge separation. This subunit is found at the monomer-monomer interface and is required for correct PSII assembly and/or dimerization. This chain is Photosystem II reaction center protein L, found in Synechococcus sp. (strain JA-3-3Ab) (Cyanobacteria bacterium Yellowstone A-Prime).